Reading from the N-terminus, the 329-residue chain is Probable cell division protein WhiA (329 aa).

A DNA-binding region (H-T-H motif) is located at residues 275 to 308; the sequence is SLEELGALADPPLTKDAVAGRIRRLLAMADKRAQ.

It belongs to the WhiA family.

Involved in cell division and chromosome segregation. This Streptomyces griseus subsp. griseus (strain JCM 4626 / CBS 651.72 / NBRC 13350 / KCC S-0626 / ISP 5235) protein is Probable cell division protein WhiA.